We begin with the raw amino-acid sequence, 335 residues long: Cell division protein ZipA (335 aa).

The Periplasmic segment spans residues 1–6; the sequence is MENLQL. Residues 7 to 27 traverse the membrane as a helical segment; it reads VLFVLGAVAIIAVLVHGFWSI. The Cytoplasmic portion of the chain corresponds to 28 to 335; that stretch reads RRQQPKSLKE…SYLQRIRAQM (308 aa). Disordered stretches follow at residues 37 to 128 and 163 to 185; these read ESPM…NEEV and RPAP…VSVE. Residues 170–185 show a composition bias toward low complexity; that stretch reads APQSVAPASVEPVSVE.

This sequence belongs to the ZipA family. As to quaternary structure, interacts with FtsZ via their C-terminal domains.

It is found in the cell inner membrane. Its function is as follows. Essential cell division protein that stabilizes the FtsZ protofilaments by cross-linking them and that serves as a cytoplasmic membrane anchor for the Z ring. Also required for the recruitment to the septal ring of downstream cell division proteins. The protein is Cell division protein ZipA of Shewanella loihica (strain ATCC BAA-1088 / PV-4).